The chain runs to 156 residues: Phosphopantetheine adenylyltransferase (156 aa).

Threonine 10 contributes to the substrate binding site. ATP contacts are provided by residues 10-11 (TF) and histidine 18. Residues lysine 42, leucine 74, and arginine 88 each contribute to the substrate site. Residues 89–91 (GLR), glutamate 99, and 124–130 (NAFISSS) each bind ATP.

Belongs to the bacterial CoaD family. Homohexamer. It depends on Mg(2+) as a cofactor.

The protein resides in the cytoplasm. It catalyses the reaction (R)-4'-phosphopantetheine + ATP + H(+) = 3'-dephospho-CoA + diphosphate. It functions in the pathway cofactor biosynthesis; coenzyme A biosynthesis; CoA from (R)-pantothenate: step 4/5. Functionally, reversibly transfers an adenylyl group from ATP to 4'-phosphopantetheine, yielding dephospho-CoA (dPCoA) and pyrophosphate. This is Phosphopantetheine adenylyltransferase from Campylobacter curvus (strain 525.92).